The sequence spans 286 residues: ATP synthase gamma chain (286 aa).

It belongs to the ATPase gamma chain family. In terms of assembly, F-type ATPases have 2 components, CF(1) - the catalytic core - and CF(0) - the membrane proton channel. CF(1) has five subunits: alpha(3), beta(3), gamma(1), delta(1), epsilon(1). CF(0) has three main subunits: a, b and c.

Its subcellular location is the cell inner membrane. Produces ATP from ADP in the presence of a proton gradient across the membrane. The gamma chain is believed to be important in regulating ATPase activity and the flow of protons through the CF(0) complex. This Shewanella halifaxensis (strain HAW-EB4) protein is ATP synthase gamma chain.